The sequence spans 464 residues: Siroheme synthase (464 aa).

The interval 1-203 (MDYLPLFHKL…GQGAEAERLL (203 aa)) is precorrin-2 dehydrogenase /sirohydrochlorin ferrochelatase. NAD(+)-binding positions include 22 to 23 (EI) and 43 to 44 (PE). The residue at position 128 (serine 128) is a Phosphoserine. Residues 216–464 (GEVYLVGAGP…AWFEGSQQDQ (249 aa)) are uroporphyrinogen-III C-methyltransferase. Proline 225 serves as a coordination point for S-adenosyl-L-methionine. Aspartate 248 functions as the Proton acceptor in the catalytic mechanism. Lysine 270 acts as the Proton donor in catalysis. Residues 301–303 (GGD), isoleucine 306, 331–332 (TA), methionine 383, and glycine 412 contribute to the S-adenosyl-L-methionine site.

This sequence in the N-terminal section; belongs to the precorrin-2 dehydrogenase / sirohydrochlorin ferrochelatase family. In the C-terminal section; belongs to the precorrin methyltransferase family.

The catalysed reaction is uroporphyrinogen III + 2 S-adenosyl-L-methionine = precorrin-2 + 2 S-adenosyl-L-homocysteine + H(+). It catalyses the reaction precorrin-2 + NAD(+) = sirohydrochlorin + NADH + 2 H(+). It carries out the reaction siroheme + 2 H(+) = sirohydrochlorin + Fe(2+). The protein operates within cofactor biosynthesis; adenosylcobalamin biosynthesis; precorrin-2 from uroporphyrinogen III: step 1/1. It functions in the pathway cofactor biosynthesis; adenosylcobalamin biosynthesis; sirohydrochlorin from precorrin-2: step 1/1. Its pathway is porphyrin-containing compound metabolism; siroheme biosynthesis; precorrin-2 from uroporphyrinogen III: step 1/1. It participates in porphyrin-containing compound metabolism; siroheme biosynthesis; siroheme from sirohydrochlorin: step 1/1. The protein operates within porphyrin-containing compound metabolism; siroheme biosynthesis; sirohydrochlorin from precorrin-2: step 1/1. Multifunctional enzyme that catalyzes the SAM-dependent methylations of uroporphyrinogen III at position C-2 and C-7 to form precorrin-2 via precorrin-1. Then it catalyzes the NAD-dependent ring dehydrogenation of precorrin-2 to yield sirohydrochlorin. Finally, it catalyzes the ferrochelation of sirohydrochlorin to yield siroheme. The polypeptide is Siroheme synthase (Pseudomonas putida (strain W619)).